The sequence spans 191 residues: Transcription factor FapR (191 aa).

Residues 102 to 169 (GIARGHHLFA…RILVTSHVNQ (68 aa)) form the MaoC-like domain.

This sequence belongs to the FapR family.

In terms of biological role, transcriptional factor involved in regulation of membrane lipid biosynthesis by repressing genes involved in fatty acid and phospholipid metabolism. In Shouchella clausii (strain KSM-K16) (Alkalihalobacillus clausii), this protein is Transcription factor FapR.